A 350-amino-acid polypeptide reads, in one-letter code: DNA repair protein RAD51 homolog 2 (350 aa).

The tract at residues 1 to 75 (MSSKKLRRVG…TAYELKTRRS (75 aa)) is interaction with RAD51C. 108–115 (GPPGCGKT) lines the ATP pocket.

This sequence belongs to the RecA family. RAD51 subfamily. In terms of assembly, part of the BCDX2 complex consisting of RAD51B, RAD51C, RAD51D and XRCC2; the complex has a ring-like structure arranged into a flat disc around a central channel. The BCDX2 subcomplex RAD51B:RAD51C interacts with RAD51. Interacts with SWSAP1; involved in homologous recombination repair. Interacts with HELQ. Post-translationally, phosphorylated on tyrosine residues by BCR-ABL. As to expression, expressed in a wide range of tissues.

Its subcellular location is the nucleus. Functionally, involved in the homologous recombination repair (HRR) pathway of double-stranded DNA breaks arising during DNA replication or induced by DNA-damaging agents. May promote the assembly of presynaptic RAD51 nucleoprotein filaments. Binds single-stranded DNA and double-stranded DNA and has DNA-dependent ATPase activity. Part of the RAD51 paralog protein complex BCDX2 which acts in the BRCA1-BRCA2-dependent HR pathway. Upon DNA damage, BCDX2 acts downstream of BRCA2 recruitment and upstream of RAD51 recruitment. BCDX2 binds predominantly to the intersection of the four duplex arms of the Holliday junction and to junction of replication forks. The BCDX2 complex was originally reported to bind single-stranded DNA, single-stranded gaps in duplex DNA and specifically to nicks in duplex DNA. The BCDX2 subcomplex RAD51B:RAD51C exhibits single-stranded DNA-dependent ATPase activity suggesting an involvement in early stages of the HR pathway. The protein is DNA repair protein RAD51 homolog 2 (Rad51b) of Mus musculus (Mouse).